Consider the following 431-residue polypeptide: MSKCVNGLRSRLTAIIGAQWGDEGKGKLVDILAEKYDYCARFNGGANAGHTIVVGGVKYAFHLLPCGILYQTCMNVIGNGVVVNIPTLFEELAQLDKNRVDYTGRLVISNRAHLVVDGLLEADAKSESDSRKKFLGTTKRGIGPTYSAKALRQGLRVGDLLHWDTFLLKYHSLNAKLREQEGIQIDTQKEINTLKDYRDILINRNMIVDTISLIANARKDGRRILAEGANATMLDIDYGTYPYVTSSSTNVGGVCTGLGVPPSAIETVIGIVKAYTTRVGEGPFPTELTNETGKYLQKTGHEFGATTGRPRRCGWLDIPILRYSIQINGHSSINLTKLDILTGLEEIKIGVNYLLNGKVIDYIPAQLEELAQVEVEYITVKGWKQDISDCKTFSELPVEAQNYIKKIEELLGIPVSWIGNGPQREKIILKD.

GTP contacts are provided by residues 21 to 27 and 49 to 51; these read GDEGKGK and GHT. D22 (proton acceptor) is an active-site residue. 2 residues coordinate Mg(2+): D22 and G49. IMP contacts are provided by residues 22-25, 47-50, T138, R152, N230, T245, and R309; these read DEGK and NAGH. H50 functions as the Proton donor in the catalytic mechanism. 305–311 lines the substrate pocket; it reads ATTGRPR. GTP contacts are provided by residues R311, 337-339, and 419-421; these read KLD and GNG.

It belongs to the adenylosuccinate synthetase family. As to quaternary structure, homodimer. The cofactor is Mg(2+).

Its subcellular location is the cytoplasm. It carries out the reaction IMP + L-aspartate + GTP = N(6)-(1,2-dicarboxyethyl)-AMP + GDP + phosphate + 2 H(+). It participates in purine metabolism; AMP biosynthesis via de novo pathway; AMP from IMP: step 1/2. In terms of biological role, plays an important role in the de novo pathway and in the salvage pathway of purine nucleotide biosynthesis. Catalyzes the first committed step in the biosynthesis of AMP from IMP. The chain is Adenylosuccinate synthetase from Paramecium tetraurelia.